We begin with the raw amino-acid sequence, 1744 residues long: DNA-directed RNA polymerase I subunit RPA1 (1744 aa).

Residues Cys56, Cys69, and His72 each contribute to the Zn(2+) site. The Mg(2+) site is built by Asp597, Asp599, and Asp601. The interval 953-965 (PAEYTIHAMAGRD) is bridging helix. The disordered stretch occupies residues 1333 to 1484 (VPREKESGDG…RDGTDWGGTS (152 aa)). Composition is skewed to gly residues over residues 1341–1354 (DGSG…GGSG) and 1366–1376 (DDGGGPLGGTF). Basic and acidic residues predominate over residues 1464–1478 (RDAEDGGEMQDRDGT).

The protein belongs to the RNA polymerase beta' chain family. Component of the RNA polymerase I (Pol I) complex consisting of at least 13 subunits. Phosphorylated.

It localises to the nucleus. It is found in the nucleolus. The catalysed reaction is RNA(n) + a ribonucleoside 5'-triphosphate = RNA(n+1) + diphosphate. In terms of biological role, DNA-dependent RNA polymerase catalyzes the transcription of DNA into RNA using the four ribonucleoside triphosphates as substrates. Largest and catalytic core component of RNA polymerase I which synthesizes ribosomal RNA precursors. Forms the polymerase active center together with the second largest subunit. A single stranded DNA template strand of the promoter is positioned within the central active site cleft of Pol I. A bridging helix emanates from RPA1 and crosses the cleft near the catalytic site and is thought to promote translocation of Pol I by acting as a ratchet that moves the RNA-DNA hybrid through the active site by switching from straight to bent conformations at each step of nucleotide addition. This chain is DNA-directed RNA polymerase I subunit RPA1 (TRP11), found in Trypanosoma brucei brucei.